A 435-amino-acid chain; its full sequence is 3-phosphoshikimate 1-carboxyvinyltransferase (435 aa).

Positions 15, 16, and 20 each coordinate 3-phosphoshikimate. Lysine 15 is a phosphoenolpyruvate binding site. Phosphoenolpyruvate is bound by residues glycine 96 and arginine 124. Residues serine 169, glutamine 171, serine 195, aspartate 318, and lysine 345 each coordinate 3-phosphoshikimate. Glutamine 171 contacts phosphoenolpyruvate. The active-site Proton acceptor is aspartate 318. Residues arginine 349 and arginine 393 each contribute to the phosphoenolpyruvate site.

The protein belongs to the EPSP synthase family. In terms of assembly, monomer.

It is found in the cytoplasm. The enzyme catalyses 3-phosphoshikimate + phosphoenolpyruvate = 5-O-(1-carboxyvinyl)-3-phosphoshikimate + phosphate. The protein operates within metabolic intermediate biosynthesis; chorismate biosynthesis; chorismate from D-erythrose 4-phosphate and phosphoenolpyruvate: step 6/7. Its function is as follows. Catalyzes the transfer of the enolpyruvyl moiety of phosphoenolpyruvate (PEP) to the 5-hydroxyl of shikimate-3-phosphate (S3P) to produce enolpyruvyl shikimate-3-phosphate and inorganic phosphate. The protein is 3-phosphoshikimate 1-carboxyvinyltransferase of Chlorobium chlorochromatii (strain CaD3).